Here is a 372-residue protein sequence, read N- to C-terminus: Dual-specificity RNA methyltransferase RlmN (372 aa).

Catalysis depends on Glu-97, which acts as the Proton acceptor. Positions 103–340 (ETDRKTLCVS…AVVRKNRGTD (238 aa)) constitute a Radical SAM core domain. The cysteines at positions 110 and 345 are disulfide-linked. Positions 117, 121, and 124 each coordinate [4Fe-4S] cluster. Residues 172 to 173 (GE), Ser-204, 226 to 228 (SLN), and Asn-302 contribute to the S-adenosyl-L-methionine site. Catalysis depends on Cys-345, which acts as the S-methylcysteine intermediate. The interval 350–372 (AEGGPGDPRRRAAAALTGTPAAG) is disordered. Positions 362–372 (AAALTGTPAAG) are enriched in low complexity.

It belongs to the radical SAM superfamily. RlmN family. Requires [4Fe-4S] cluster as cofactor.

It is found in the cytoplasm. It catalyses the reaction adenosine(2503) in 23S rRNA + 2 reduced [2Fe-2S]-[ferredoxin] + 2 S-adenosyl-L-methionine = 2-methyladenosine(2503) in 23S rRNA + 5'-deoxyadenosine + L-methionine + 2 oxidized [2Fe-2S]-[ferredoxin] + S-adenosyl-L-homocysteine. The catalysed reaction is adenosine(37) in tRNA + 2 reduced [2Fe-2S]-[ferredoxin] + 2 S-adenosyl-L-methionine = 2-methyladenosine(37) in tRNA + 5'-deoxyadenosine + L-methionine + 2 oxidized [2Fe-2S]-[ferredoxin] + S-adenosyl-L-homocysteine. In terms of biological role, specifically methylates position 2 of adenine 2503 in 23S rRNA and position 2 of adenine 37 in tRNAs. m2A2503 modification seems to play a crucial role in the proofreading step occurring at the peptidyl transferase center and thus would serve to optimize ribosomal fidelity. The sequence is that of Dual-specificity RNA methyltransferase RlmN from Anaeromyxobacter dehalogenans (strain 2CP-C).